The primary structure comprises 207 residues: NADH-quinone oxidoreductase subunit C (207 aa).

Belongs to the complex I 30 kDa subunit family. In terms of assembly, NDH-1 is composed of 14 different subunits. Subunits NuoB, C, D, E, F, and G constitute the peripheral sector of the complex.

Its subcellular location is the cell inner membrane. The catalysed reaction is a quinone + NADH + 5 H(+)(in) = a quinol + NAD(+) + 4 H(+)(out). NDH-1 shuttles electrons from NADH, via FMN and iron-sulfur (Fe-S) centers, to quinones in the respiratory chain. The immediate electron acceptor for the enzyme in this species is believed to be ubiquinone. Couples the redox reaction to proton translocation (for every two electrons transferred, four hydrogen ions are translocated across the cytoplasmic membrane), and thus conserves the redox energy in a proton gradient. This chain is NADH-quinone oxidoreductase subunit C, found in Rickettsia felis (strain ATCC VR-1525 / URRWXCal2) (Rickettsia azadi).